The chain runs to 539 residues: Chaperonin GroEL (539 aa).

Residues 30–33 (TLGP), lysine 51, 87–91 (DGTTT), glycine 415, 479–481 (NAA), and aspartate 495 contribute to the ATP site.

The protein belongs to the chaperonin (HSP60) family. In terms of assembly, forms a cylinder of 14 subunits composed of two heptameric rings stacked back-to-back. Interacts with the co-chaperonin GroES.

The protein localises to the cytoplasm. The catalysed reaction is ATP + H2O + a folded polypeptide = ADP + phosphate + an unfolded polypeptide.. Functionally, together with its co-chaperonin GroES, plays an essential role in assisting protein folding. The GroEL-GroES system forms a nano-cage that allows encapsulation of the non-native substrate proteins and provides a physical environment optimized to promote and accelerate protein folding. The polypeptide is Chaperonin GroEL (Enterobacter agglomerans (Erwinia herbicola)).